A 406-amino-acid polypeptide reads, in one-letter code: Tryptophan synthase beta chain (406 aa).

Lys-95 is modified (N6-(pyridoxal phosphate)lysine).

The protein belongs to the TrpB family. As to quaternary structure, tetramer of two alpha and two beta chains. Pyridoxal 5'-phosphate serves as cofactor.

It carries out the reaction (1S,2R)-1-C-(indol-3-yl)glycerol 3-phosphate + L-serine = D-glyceraldehyde 3-phosphate + L-tryptophan + H2O. It functions in the pathway amino-acid biosynthesis; L-tryptophan biosynthesis; L-tryptophan from chorismate: step 5/5. Functionally, the beta subunit is responsible for the synthesis of L-tryptophan from indole and L-serine. The polypeptide is Tryptophan synthase beta chain (Pseudomonas fluorescens (strain ATCC BAA-477 / NRRL B-23932 / Pf-5)).